Reading from the N-terminus, the 565-residue chain is MHEIFNMLLAVFDRAALMLICLFFLIRIRLFRELLHKSAHSPKELLAVTAIFSLFALFSTWSGVPVEGSLVNVRIIAVMSGGILFGPWVGIITGVIAGIHRYLIDIGGVTAIPCFITSILAGCISGWINLKIPKAQRWRVGILGGMLCETLTMILVIVWAPTTALGIDIVSKIGIPMILGSVCIGFIVLLVQSVEGEKEASAARQAKLALDIANKTLPLFRHVNSESLRKVCEIIRDDIHADAVAITNTDHVLAYVGVGEHNYQNGDDFISPTTRQAMNYGKIIIKNNDEAHRTPEIHSMLVIPLWEKGVVTGTLKIYYCHAHQITSSLQEMAVGLSQIISTQLEVSRAEQLREMANKAELRALQSKINPHFLFNALNAISSSIRLNPDTARQLIFNLSRYLRYNIELKDDEQIDIKKELYQIKDYIAIEQARFGDKLTVIYDIDEEVNCCIPSLLIQPLVENAIVHGIQPCKGKGVVTISVAECGNRVRIAVRDTGHGIDPKVIERVEANEMPGNKIGLLNVHHRVKLLYGEGLHIRRLEPGTEIAFYIPNQRTPVASQATLLL.

Residues 1-3 are Cytoplasmic-facing; it reads MHE. Residues 4–24 traverse the membrane as a helical segment; sequence IFNMLLAVFDRAALMLICLFF. Residues 25-45 lie on the Periplasmic side of the membrane; the sequence is LIRIRLFRELLHKSAHSPKEL. The helical transmembrane segment at 46–66 threads the bilayer; that stretch reads LAVTAIFSLFALFSTWSGVPV. At 67–74 the chain is on the cytoplasmic side; the sequence is EGSLVNVR. The helical transmembrane segment at 75 to 95 threads the bilayer; sequence IIAVMSGGILFGPWVGIITGV. Over 96-107 the chain is Periplasmic; sequence IAGIHRYLIDIG. The chain crosses the membrane as a helical span at residues 108-128; sequence GVTAIPCFITSILAGCISGWI. Topologically, residues 129–139 are cytoplasmic; the sequence is NLKIPKAQRWR. Residues 140–160 form a helical membrane-spanning segment; the sequence is VGILGGMLCETLTMILVIVWA. The Periplasmic portion of the chain corresponds to 161 to 172; that stretch reads PTTALGIDIVSK. A helical transmembrane segment spans residues 173 to 193; that stretch reads IGIPMILGSVCIGFIVLLVQS. Residues 194-565 lie on the Cytoplasmic side of the membrane; it reads VEGEKEASAA…PVASQATLLL (372 aa). A GAF domain is found at 223–342; sequence VNSESLRKVC…AVGLSQIIST (120 aa). A Histidine kinase domain is found at 343-554; sequence QLEVSRAEQL…EIAFYIPNQR (212 aa). Position 371 is a phosphohistidine; by autocatalysis (histidine 371).

As to quaternary structure, interacts with BtsT and YhjX. Autophosphorylated.

The protein resides in the cell inner membrane. The catalysed reaction is ATP + protein L-histidine = ADP + protein N-phospho-L-histidine.. Member of the two-component regulatory system YpdA/YpdB, which is part of a nutrient-sensing regulatory network composed of YpdA/YpdB, the high-affinity pyruvate signaling system BtsS/BtsR and their respective target proteins, YhjX and BtsT. YpdA activates YpdB by phosphorylation in response to high concentrations of extracellular pyruvate. Activation of the YpdA/YpdB signaling cascade also promotes BtsS/BtsR-mediated btsT expression. The protein is Sensor histidine kinase YpdA (ypdA) of Escherichia coli (strain K12).